The chain runs to 221 residues: Thymidylate kinase (221 aa).

10 to 17 (GIDGAGKT) contacts ATP.

The protein belongs to the thymidylate kinase family.

It carries out the reaction dTMP + ATP = dTDP + ADP. Functionally, phosphorylation of dTMP to form dTDP in both de novo and salvage pathways of dTTP synthesis. This is Thymidylate kinase from Desulforudis audaxviator (strain MP104C).